The chain runs to 430 residues: Keratin, type I cytoskeletal 18 (430 aa).

Ser2 is modified (N-acetylserine). The head stretch occupies residues 2–79 (SFTTRSTFST…GLAGMGGIQN (78 aa)). Ser7, Ser10, Ser15, and Ser18 each carry phosphoserine. A phosphoserine; alternate mark is found at Ser30 and Ser31. O-linked (GlcNAc) serine; alternate glycans are attached at residues Ser30 and Ser31. Ser34 carries the post-translational modification Phosphoserine; by CDK1. Tyr36 carries the phosphotyrosine modification. The residue at position 42 (Ser42) is a Phosphoserine. Arg45 is subject to Omega-N-methylarginine. Phosphoserine; alternate is present on Ser49. Ser49 carries O-linked (GlcNAc) serine; alternate glycosylation. Ser51 is subject to Phosphoserine; by MAPKAPK2 and MAPKAPK3. A Phosphothreonine modification is found at Thr52. A Phosphoserine; by CAMK, PKC/PRKCE and AURKA modification is found at Ser53. Position 55 is an omega-N-methylarginine (Arg55). Phosphoserine is present on Ser60. Thr65 is modified (phosphothreonine). Residues 70-373 (GLAGMGGIQN…EALLNIKVKL (304 aa)) are necessary for interaction with PNN. Residues 77–128 (IQNEKETMQSLNDRLASYLDRVRSLETENRRLESKIREHLEKKGPQVRDWSH) are interaction with TRADD. The segment at 80–115 (EKETMQSLNDRLASYLDRVRSLETENRRLESKIREH) is coil 1A. Residues 80–391 (EKETMQSLND…RLLEDGEDFN (312 aa)) enclose the IF rod domain. Residue Lys81 forms a Glycyl lysine isopeptide (Lys-Gly) (interchain with G-Cter in SUMO2) linkage. 2 positions are modified to phosphoserine: Ser93 and Ser100. The linker 1 stretch occupies residues 116–132 (LEKKGPQVRDWSHYFKI). The residue at position 131 (Lys131) is an N6-acetyllysine. A coil 1B region spans residues 133 to 224 (IEDLRAQIFA…KNHEEEVKGL (92 aa)). The residue at position 177 (Ser177) is a Phosphoserine. The linker 12 stretch occupies residues 225–248 (QAQIASSGLTVEVDAPKSQDLAKI). The interaction with DNAJB6 stretch occupies residues 243-391 (QDLAKIMADI…RLLEDGEDFN (149 aa)). Residue Lys247 forms a Glycyl lysine isopeptide (Lys-Gly) (interchain with G-Cter in SUMO2) linkage. The coil 2 stretch occupies residues 249–387 (MADIRAQYDE…ATYRRLLEDG (139 aa)). Thr302 carries the post-translational modification Phosphothreonine. 3 positions are modified to phosphoserine: Ser305, Ser319, and Ser323. Residues Lys370 and Lys372 each participate in a glycyl lysine isopeptide (Lys-Gly) (interchain with G-Cter in SUMO2) cross-link. The interval 388-430 (EDFNLGDALDSSNSMQTIQKTTTRRIVDGKVVSETNDTKVLRH) is tail. 3 positions are modified to phosphoserine: Ser398, Ser399, and Ser401. Thr404 bears the Phosphothreonine mark. Lys417 participates in a covalent cross-link: Glycyl lysine isopeptide (Lys-Gly) (interchain with G-Cter in SUMO2). Lys426 is subject to N6-acetyllysine; alternate. Residue Lys426 forms a Glycyl lysine isopeptide (Lys-Gly) (interchain with G-Cter in SUMO1); alternate linkage. Residue Lys426 forms a Glycyl lysine isopeptide (Lys-Gly) (interchain with G-Cter in SUMO2); alternate linkage.

The protein belongs to the intermediate filament family. In terms of assembly, heterotetramer of two type I and two type II keratins. KRT18 associates with KRT8. Interacts with PLEC isoform 1C, when in a heterodimer with KRT8. Interacts with the thrombin-antithrombin complex. Interacts with PNN and mutated CFTR. Interacts with YWHAE, YWHAH and YWHAZ only when phosphorylated. Interacts with DNAJB6, TCHP and TRADD. Interacts with FAM83H. Interacts with EPPK1. Interacts with PKP1 and PKP2. (Microbial infection) Interacts with hepatitis C virus/HCV core protein. In terms of processing, phosphorylation at Ser-34 increases during mitosis. Hyperphosphorylated at Ser-53 in diseased cirrhosis liver. Phosphorylation increases by IL-6. Post-translationally, proteolytically cleaved by caspases during epithelial cell apoptosis. Cleavage occurs at Asp-238 by either caspase-3, caspase-6 or caspase-7. O-GlcNAcylation increases solubility, and decreases stability by inducing proteasomal degradation. Expressed in colon, placenta, liver and very weakly in exocervix. Increased expression observed in lymph nodes of breast carcinoma.

The protein resides in the nucleus matrix. It is found in the cytoplasm. The protein localises to the perinuclear region. Its subcellular location is the nucleus. It localises to the nucleolus. Functionally, involved in the uptake of thrombin-antithrombin complexes by hepatic cells. When phosphorylated, plays a role in filament reorganization. Involved in the delivery of mutated CFTR to the plasma membrane. Together with KRT8, is involved in interleukin-6 (IL-6)-mediated barrier protection. This Homo sapiens (Human) protein is Keratin, type I cytoskeletal 18 (KRT18).